The sequence spans 400 residues: ATP phosphoribosyltransferase regulatory subunit (400 aa).

The protein belongs to the class-II aminoacyl-tRNA synthetase family. HisZ subfamily. Heteromultimer composed of HisG and HisZ subunits.

It localises to the cytoplasm. The protein operates within amino-acid biosynthesis; L-histidine biosynthesis; L-histidine from 5-phospho-alpha-D-ribose 1-diphosphate: step 1/9. Its function is as follows. Required for the first step of histidine biosynthesis. May allow the feedback regulation of ATP phosphoribosyltransferase activity by histidine. This Hahella chejuensis (strain KCTC 2396) protein is ATP phosphoribosyltransferase regulatory subunit.